Consider the following 247-residue polypeptide: ATP synthase subunit a, chloroplastic (247 aa).

A run of 5 helical transmembrane segments spans residues 36–56 (GQVLMTSWFVFAVIAILSIAG), 95–115 (IPFLGTLFLFIFVSNWSGALI), 134–154 (INTTVALALLTSTAYFYAGFS), 199–219 (LVVGVLVALVPLVVPIPIMLL), and 220–240 (GLFTSGIQALVFATLAGAYIG).

This sequence belongs to the ATPase A chain family. In terms of assembly, F-type ATPases have 2 components, CF(1) - the catalytic core - and CF(0) - the membrane proton channel. CF(1) has five subunits: alpha(3), beta(3), gamma(1), delta(1), epsilon(1). CF(0) has four main subunits: a, b, b' and c.

It localises to the plastid. The protein localises to the chloroplast thylakoid membrane. Its function is as follows. Key component of the proton channel; it plays a direct role in the translocation of protons across the membrane. The sequence is that of ATP synthase subunit a, chloroplastic from Tupiella akineta (Green alga).